The primary structure comprises 932 residues: PMS1 protein homolog 1 (932 aa).

Positions 465–493 (TQSENGNKDHIDESGENEEEAGLENSSEI) are disordered. Residues 571–639 (IKKPMSASAL…RYNSQMKRAI (69 aa)) constitute a DNA-binding region (HMG box).

It belongs to the DNA mismatch repair MutL/HexB family. As to quaternary structure, component of the DNA mismatch repair (MMR) complex composed at least of MSH2, MSH3, MSH6, PMS1 and MLH1. The MutL-beta complex is a heterodimer of PMS1 and MLH1. Interacts with MCM9.

It localises to the nucleus. In terms of biological role, probably involved in the repair of mismatches in DNA. In Homo sapiens (Human), this protein is PMS1 protein homolog 1 (PMS1).